The primary structure comprises 705 residues: Bifunctional arginine dihydrolase/ornithine cyclodeaminase ArgZ (705 aa).

The segment at 10 to 269 (CPPDHYDVDY…GAAKCLTLRV (260 aa)) is arginine dihydrolase. The L-arginine site is built by asparagine 22, asparagine 71, arginine 90, arginine 139, histidine 168, aspartate 170, alanine 258, and cysteine 264. L-ornithine is bound by residues asparagine 22, asparagine 71, arginine 90, arginine 139, and histidine 168. The active-site Proton donor/acceptor is the histidine 168. Positions 258 and 264 each coordinate L-ornithine. The active-site Nucleophile is cysteine 264. An ornithine cyclodeaminase region spans residues 285–695 (SRVIRMEGHL…SLLVRQLQQL (411 aa)). The NAD(+) site is built by asparagine 525, alanine 526, aspartate 604, serine 636, methionine 637, leucine 638, histidine 639, aspartate 657, aspartate 680, and valine 681.

This sequence in the N-terminal section; belongs to the DDAH family. It in the C-terminal section; belongs to the AgrE/ArgZ ornithine cyclodeaminase family. As to quaternary structure, homotetramer. The cofactor is NAD(+).

The enzyme catalyses L-arginine + 2 H2O + 2 H(+) = L-ornithine + 2 NH4(+) + CO2. It carries out the reaction L-ornithine = L-proline + NH4(+). Arginine dihydrolase activity does not require a metal cofactor. In terms of biological role, bifunctional enzyme involved in a cyanobacterial arginine utilization pathway that enables cellular adaptation to nitrogen fluctuations. Catalyzes the hydrolysis of arginine to ornithine, with the release of ammonia and carbon dioxide. Then, probably catalyzes the conversion of ornithine to proline, with the release of ammonia. Is highly specific for arginine and cannot hydrolyze citrulline, dimethylarginine and other amino acids. The protein is Bifunctional arginine dihydrolase/ornithine cyclodeaminase ArgZ of Synechocystis sp. (strain ATCC 27184 / PCC 6803 / Kazusa).